The chain runs to 461 residues: MRVLIKNGTVVNADGQAKQDLLIESAIVRQLGNNISPQLPYEEIDATGCYVFPGGVDVHTHFNIDVGIARSCDDFFTGTRAAACGGTTTIIDHMGFGPNGCRLRHQLEVYRGYAAHKAVIDYSFHGVIQHINHAILDEIPMMVEEGLSSFKLYLTYQYKLNDDEVLQALRRLHESGALTTVHPENDAAIASKRAEFIAAGLTAPRYHALSRPLECEAEAIARMINLAQIAGNAPLYIVHLSNGLGLDYLRLARANHQPVWVETCPQYLLLDERSYDTEDGMKFILSPPLRNVREQDKLWCGISDGAIDVVATDHCTFSMAQRLQISKGDFSRCPNGLPGVENRMQLLFSSGVMTGRITPERFVELTSAMPARLFGLWPQKGLLAPGSDGDVVIIDPRQSQQIQHRHLHDNADYSPWEGFTCQGAIVRTLSRGETIFCDGTFTGKAGRGRFLRRKPFVPPVL.

The a divalent metal cation site is built by His59, His61, and Lys151. Lys151 is modified (N6-carboxylysine). Tyr156 provides a ligand contact to substrate. His182 and His239 together coordinate a divalent metal cation. Ser286 is a substrate binding site. Asp313 lines the a divalent metal cation pocket. Asn335 contacts substrate.

It belongs to the metallo-dependent hydrolases superfamily. Hydantoinase/dihydropyrimidinase family. Homotetramer. It depends on a divalent metal cation as a cofactor. Carboxylation allows a single lysine to coordinate two divalent metal cations.

The enzyme catalyses D-5-phenylhydantoin + H2O = N-carbamoyl-D-phenylglycine + H(+). Its function is as follows. Catalyzes the stereospecific hydrolysis of the cyclic amide bond of D-hydantoin derivatives with an aromatic side chains at the 5'-position. Has no activity on dihydropyrimidines. The physiological function is unknown. The protein is D-phenylhydantoinase of Escherichia coli O17:K52:H18 (strain UMN026 / ExPEC).